An 817-amino-acid chain; its full sequence is Neurabin-2 (817 aa).

Disordered regions lie at residues 1–52 (MMKT…KYGS) and 64–163 (MGTT…GGDK). 2 actin-binding regions span residues 1 to 154 (MMKT…FERS) and 164 to 282 (EAVA…QHRV). Ser15 is modified (phosphoserine; by MAPK1). The residue at position 17 (Ser17) is a Phosphoserine; by CDK5. Ser94 is subject to Phosphoserine; by PKA. Residues Ser100 and Ser116 each carry the phosphoserine modification. The tract at residues 100–371 (SLNENVDHSA…LERGVDNGRA (272 aa)) is interaction with D(2) dopamine receptor. Pro residues predominate over residues 131–141 (SAQPAPPPHPP). The interaction with ADRA2A, ADRA2B and ADRA2C stretch occupies residues 169-255 (RLLRQERAGL…KRSRVFQPPP (87 aa)). Residue Ser192 is modified to Phosphoserine. Thr193 bears the Phosphothreonine mark. Residue Ser205 is modified to Phosphoserine; by MAPK1. At Thr207 the chain carries Phosphothreonine. A disordered region spans residues 216 to 451 (EKADSRTGLH…DPAPSRKIHF (236 aa)). A compositionally biased stretch (basic and acidic residues) spans 290–301 (KPREVRKIKPVE). Low complexity-rich tracts occupy residues 332 to 341 (STPATTASPA) and 399 to 409 (SGLGEDSGGSA). Residues 410–425 (LEEDDEEDEEDGEPPY) show a composition bias toward acidic residues. The interaction with protein phosphatase 1 stretch occupies residues 417–494 (DEEDGEPPYE…LEKRVERLEL (78 aa)). Ser438 bears the Phosphoserine mark. The short motif at 447–451 (RKIHF) is the PP1-binding motif element. The interaction with RGS2 stretch occupies residues 480–525 (SAEYELEKRVERLELFPVELEKDSEGLGISIIGMGAGADMGLEKLG). Residues 496 to 584 (PVELEKDSEG…RVRFMIGRER (89 aa)) form the PDZ domain. The stretch at 595–616 (IQQTLEQERWQREMMEQRYAQY) forms a coiled coil. The tract at residues 595–816 (IQQTLEQERW…NLQTLRNSNS (222 aa)) is interaction with TGN38. Ser658 is modified (phosphoserine). Positions 665–816 (EKLVHKFKEL…NLQTLRNSNS (152 aa)) form a coiled coil.

In terms of assembly, possibly exists as a homodimer, homotrimer or a homotetramer. Interacts with F-actin, PPP1CA, neurabin-1, TGN38 and D(2) dopamine receptor. Interacts with RGS1, RGS2, RGS4, RGS19 and ADRA1B, ADRA2A, ADRA2B, ADRA2C, CDKN2A, PPP1R2, RASGFR1 and TIAM1. Interacts (via C-terminus) with SPATA13 (via C-terminal tail). Interacts with DCLK2. Interacts with ADRA2B. In terms of processing, stimulation of D1 (but not D2) dopamine receptors induces Ser-94 phosphorylation. Dephosphorylation of Ser-94 is mediated mainly by PP1 and to a lesser extent by PP2A. Phosphorylation of spinophilin disrupts its association with F-actin, but does not affect its binding to PP1.

Its subcellular location is the cytoplasm. The protein localises to the cytoskeleton. It localises to the nucleus. The protein resides in the postsynaptic density. It is found in the cell junction. Its subcellular location is the adherens junction. The protein localises to the cell projection. It localises to the dendritic spine. The protein resides in the cell membrane. It is found in the lamellipodium. Its subcellular location is the filopodium. The protein localises to the ruffle membrane. Functionally, seems to act as a scaffold protein in multiple signaling pathways. Modulates excitatory synaptic transmission and dendritic spine morphology. Binds to actin filaments (F-actin) and shows cross-linking activity. Binds along the sides of the F-actin. May play an important role in linking the actin cytoskeleton to the plasma membrane at the synaptic junction. Believed to target protein phosphatase 1/PP1 to dendritic spines, which are rich in F-actin, and regulates its specificity toward ion channels and other substrates, such as AMPA-type and NMDA-type glutamate receptors. Plays a role in regulation of G-protein coupled receptor signaling, including dopamine D2 receptors and alpha-adrenergic receptors. May establish a signaling complex for dopaminergic neurotransmission through D2 receptors by linking receptors downstream signaling molecules and the actin cytoskeleton. Binds to ADRA1B and RGS2 and mediates regulation of ADRA1B signaling. May confer to Rac signaling specificity by binding to both, RacGEFs and Rac effector proteins. Probably regulates p70 S6 kinase activity by forming a complex with TIAM1. Required for hepatocyte growth factor (HGF)-induced cell migration. This Mus musculus (Mouse) protein is Neurabin-2 (Ppp1r9b).